Here is a 178-residue protein sequence, read N- to C-terminus: Cytidylate kinase 2 (178 aa).

7 to 15 (GKSGCGNTT) is a binding site for ATP.

The protein belongs to the cytidylate kinase family. Type 2 subfamily.

It localises to the cytoplasm. It catalyses the reaction CMP + ATP = CDP + ADP. The catalysed reaction is dCMP + ATP = dCDP + ADP. The chain is Cytidylate kinase 2 from Borrelia garinii subsp. bavariensis (strain ATCC BAA-2496 / DSM 23469 / PBi) (Borreliella bavariensis).